Reading from the N-terminus, the 396-residue chain is Probable arginine kinase F46H5.3 (396 aa).

A Phosphagen kinase N-terminal domain is found at 47–129 (KIEEGYAKLQ…FDPLIQDYHN (83 aa)). Residue 102–106 (GVGVY) coordinates substrate. The region spanning 159–396 (FINSTRIRCG…AHLIALEKAA (238 aa)) is the Phosphagen kinase C-terminal domain. ATP is bound by residues 162-166 (STRIR) and H226. E266 serves as a coordination point for substrate. R270 is an ATP binding site. C312 is a substrate binding site. ATP is bound by residues 321–325 (RASVH), 349–354 (RGIHGE), and D364. E354 contributes to the substrate binding site.

This sequence belongs to the ATP:guanido phosphotransferase family.

The enzyme catalyses L-arginine + ATP = N(omega)-phospho-L-arginine + ADP + H(+). The chain is Probable arginine kinase F46H5.3 from Caenorhabditis elegans.